The following is an 845-amino-acid chain: Beta-mannosidase B (845 aa).

N-linked (GlcNAc...) asparagine glycosylation is present at asparagine 252. Glutamate 432 acts as the Proton donor in catalysis. N-linked (GlcNAc...) asparagine glycosylation is found at asparagine 717 and asparagine 723.

The protein belongs to the glycosyl hydrolase 2 family. Beta-mannosidase B subfamily.

It catalyses the reaction Hydrolysis of terminal, non-reducing beta-D-mannose residues in beta-D-mannosides.. It participates in glycan metabolism; N-glycan degradation. Its function is as follows. Exoglycosidase that cleaves the single beta-linked mannose residue from the non-reducing end of beta-mannosidic oligosaccharides of various complexity and length. Prefers mannobiose over mannotriose and has no activity against polymeric mannan. Is also severely restricted by galactosyl substitutions at the +1 subsite. This Aspergillus fumigatus (strain CBS 144.89 / FGSC A1163 / CEA10) (Neosartorya fumigata) protein is Beta-mannosidase B (mndB).